The chain runs to 266 residues: DNA-directed RNA polymerase subunit Rpo3 (266 aa).

3 residues coordinate [3Fe-4S] cluster: C205, C208, and C211.

The protein belongs to the archaeal Rpo3/eukaryotic RPB3 RNA polymerase subunit family. As to quaternary structure, part of the RNA polymerase complex. It depends on [3Fe-4S] cluster as a cofactor.

It is found in the cytoplasm. The catalysed reaction is RNA(n) + a ribonucleoside 5'-triphosphate = RNA(n+1) + diphosphate. Its function is as follows. DNA-dependent RNA polymerase (RNAP) catalyzes the transcription of DNA into RNA using the four ribonucleoside triphosphates as substrates. The polypeptide is DNA-directed RNA polymerase subunit Rpo3 (Methanosarcina acetivorans (strain ATCC 35395 / DSM 2834 / JCM 12185 / C2A)).